The chain runs to 741 residues: Interleukin-17 receptor D (741 aa).

Residues 1 to 26 form the signal peptide; it reads MAPGRELGAFLLALLAFCGGRRLAEA. Residues 27-301 lie on the Extracellular side of the membrane; that stretch reads AGGPGGRRGA…VHSPWAGPIR (275 aa). Residues Asn-57, Asn-82, Asn-173, Asn-208, and Asn-279 are each glycosylated (N-linked (GlcNAc...) asparagine). The chain crosses the membrane as a helical span at residues 302 to 322; the sequence is AIAITVPLVVISAFATLFTVM. Residues 323–741 are Cytoplasmic-facing; the sequence is CRKKQQENIY…TDELQAIAPL (419 aa). An SEFIR domain is found at 357 to 510; it reads RPKVFICYSS…LMDNLPQLYS (154 aa). Low complexity predominate over residues 688–703; that stretch reads TETSSITGSVSSSSGL. Residues 688–708 form a disordered region; it reads TETSSITGSVSSSSGLGEEEP.

Its subcellular location is the membrane. Its function is as follows. Feedback inhibitor of fibroblast growth factor mediated Ras-MAPK signaling and ERK activation. May inhibit FGF-induced FGFR1 tyrosine phosphorylation. Inhibits TGFB-induced epithelial-to-mesenchymal transition in lens epithelial cells. This is Interleukin-17 receptor D (IL17RD) from Gallus gallus (Chicken).